Here is a 312-residue protein sequence, read N- to C-terminus: HPr kinase/phosphorylase (312 aa).

Active-site residues include His-141 and Lys-162. An ATP-binding site is contributed by 156 to 163 (GDSGIGKS). Residue Ser-163 participates in Mg(2+) binding. Residue Asp-180 is the Proton acceptor; for phosphorylation activity. Proton donor; for dephosphorylation activity of the active site. Residues 204–213 (LEIRGVGIID) are important for the catalytic mechanism of both phosphorylation and dephosphorylation. Position 205 (Glu-205) interacts with Mg(2+). Residue Arg-246 is part of the active site. Residues 267–272 (PVRVGR) form an important for the catalytic mechanism of dephosphorylation region.

This sequence belongs to the HPrK/P family. Homohexamer. The cofactor is Mg(2+).

The enzyme catalyses [HPr protein]-L-serine + ATP = [HPr protein]-O-phospho-L-serine + ADP + H(+). It catalyses the reaction [HPr protein]-O-phospho-L-serine + phosphate + H(+) = [HPr protein]-L-serine + diphosphate. In terms of biological role, catalyzes the ATP- as well as the pyrophosphate-dependent phosphorylation of a specific serine residue in HPr, a phosphocarrier protein of the phosphoenolpyruvate-dependent sugar phosphotransferase system (PTS). HprK/P also catalyzes the pyrophosphate-producing, inorganic phosphate-dependent dephosphorylation (phosphorolysis) of seryl-phosphorylated HPr (P-Ser-HPr). The two antagonistic activities of HprK/P are regulated by several intracellular metabolites, which change their concentration in response to the absence or presence of rapidly metabolisable carbon sources (glucose, fructose, etc.) in the growth medium. Therefore, by controlling the phosphorylation state of HPr, HPrK/P is a sensor enzyme that plays a major role in the regulation of carbon metabolism and sugar transport: it mediates carbon catabolite repression (CCR), and regulates PTS-catalyzed carbohydrate uptake and inducer exclusion. In Pediococcus pentosaceus (strain ATCC 25745 / CCUG 21536 / LMG 10740 / 183-1w), this protein is HPr kinase/phosphorylase.